Consider the following 299-residue polypeptide: HTH-type transcriptional regulator CrgA (299 aa).

Residues 1 to 60 (MKTNSEELTVFVQVVESGSFSRAAEQLAMANSAVSRIVKRLEEKLGVNLLNRTTRQLSLT) enclose the HTH lysR-type domain. Positions 20 to 39 (FSRAAEQLAMANSAVSRIVK) form a DNA-binding region, H-T-H motif.

This sequence belongs to the LysR transcriptional regulatory family. In terms of assembly, forms oligomers. Forms an octomeric ring-like structure in solution. May form hexadecamers when bound to target DNA.

Its activity is regulated as follows. Activation and repression activities are enhanced by the addition of alpha-methylene-gamma-butyrolactone (MBL), an inducer of NADPH:quinone oxidoreductase. Regulatory protein that activates transcription of mdaB, encoding a NADPH:quinone oxidoreductase, and represses its own transcription. Under the same experimental conditions, no regulation of transcription of pilus and capsule genes is detected. The protein is HTH-type transcriptional regulator CrgA of Neisseria meningitidis serogroup B (strain ATCC BAA-335 / MC58).